Reading from the N-terminus, the 371-residue chain is 4-hydroxy-3-methylbut-2-en-1-yl diphosphate synthase (flavodoxin) (371 aa).

[4Fe-4S] cluster is bound by residues Cys-270, Cys-273, Cys-305, and Glu-312.

The protein belongs to the IspG family. [4Fe-4S] cluster is required as a cofactor.

The catalysed reaction is (2E)-4-hydroxy-3-methylbut-2-enyl diphosphate + oxidized [flavodoxin] + H2O + 2 H(+) = 2-C-methyl-D-erythritol 2,4-cyclic diphosphate + reduced [flavodoxin]. It functions in the pathway isoprenoid biosynthesis; isopentenyl diphosphate biosynthesis via DXP pathway; isopentenyl diphosphate from 1-deoxy-D-xylulose 5-phosphate: step 5/6. Converts 2C-methyl-D-erythritol 2,4-cyclodiphosphate (ME-2,4cPP) into 1-hydroxy-2-methyl-2-(E)-butenyl 4-diphosphate. The protein is 4-hydroxy-3-methylbut-2-en-1-yl diphosphate synthase (flavodoxin) of Shewanella piezotolerans (strain WP3 / JCM 13877).